A 138-amino-acid chain; its full sequence is Small ribosomal subunit protein uS12 (138 aa).

The interval K33–P55 is disordered.

The protein belongs to the universal ribosomal protein uS12 family. In terms of assembly, part of the 30S ribosomal subunit. Contacts proteins S8 and S17. May interact with IF1 in the 30S initiation complex. Interacts with BrxC.

Its function is as follows. With S4 and S5 plays an important role in translational accuracy. Functionally, interacts with and stabilizes bases of the 16S rRNA that are involved in tRNA selection in the A site and with the mRNA backbone. Located at the interface of the 30S and 50S subunits, it traverses the body of the 30S subunit contacting proteins on the other side and probably holding the rRNA structure together. The combined cluster of proteins S8, S12 and S17 appears to hold together the shoulder and platform of the 30S subunit. This is Small ribosomal subunit protein uS12 (rpsL) from Bacillus subtilis (strain 168).